Here is a 160-residue protein sequence, read N- to C-terminus: 2-C-methyl-D-erythritol 2,4-cyclodiphosphate synthase (160 aa).

A divalent metal cation contacts are provided by aspartate 10 and histidine 12. Residues 10–12 (DVH) and 36–37 (HS) each bind 4-CDP-2-C-methyl-D-erythritol 2-phosphate. Histidine 44 is an a divalent metal cation binding site. Residues 58–60 (DIG), 63–67 (FPDTD), 102–108 (AQAPKMA), 134–137 (TTTE), phenylalanine 141, and arginine 144 each bind 4-CDP-2-C-methyl-D-erythritol 2-phosphate.

Belongs to the IspF family. In terms of assembly, homotrimer. A divalent metal cation is required as a cofactor.

It carries out the reaction 4-CDP-2-C-methyl-D-erythritol 2-phosphate = 2-C-methyl-D-erythritol 2,4-cyclic diphosphate + CMP. It participates in isoprenoid biosynthesis; isopentenyl diphosphate biosynthesis via DXP pathway; isopentenyl diphosphate from 1-deoxy-D-xylulose 5-phosphate: step 4/6. Involved in the biosynthesis of isopentenyl diphosphate (IPP) and dimethylallyl diphosphate (DMAPP), two major building blocks of isoprenoid compounds. Catalyzes the conversion of 4-diphosphocytidyl-2-C-methyl-D-erythritol 2-phosphate (CDP-ME2P) to 2-C-methyl-D-erythritol 2,4-cyclodiphosphate (ME-CPP) with a corresponding release of cytidine 5-monophosphate (CMP). This Shewanella denitrificans (strain OS217 / ATCC BAA-1090 / DSM 15013) protein is 2-C-methyl-D-erythritol 2,4-cyclodiphosphate synthase.